The sequence spans 523 residues: Monocarboxylate transporter 7 (523 aa).

The Cytoplasmic segment spans residues 1 to 21; it reads MTQNKLKLCSKANVYTEVPDG. The chain crosses the membrane as a helical span at residues 22-42; sequence GWGWAVAVSFFFVEVFTYGII. The Extracellular portion of the chain corresponds to 43-62; the sequence is KTFGVFFNDLMDSFNESNSR. The helical transmembrane segment at 63 to 83 threads the bilayer; the sequence is ISWIISICVFVLTFSAPLATV. The Cytoplasmic portion of the chain corresponds to 84-91; it reads LSNRFGHR. Residues 92–112 form a helical membrane-spanning segment; the sequence is LVVMLGGLLVSTGMVAASFSQ. At 113–118 the chain is on the extracellular side; that stretch reads EVSHMY. Residues 119–139 form a helical membrane-spanning segment; that stretch reads VAIGIISGLGYCFSFLPTVTI. The Cytoplasmic segment spans residues 140-149; that stretch reads LSQYFGKRRS. The chain crosses the membrane as a helical span at residues 150–170; it reads IVTAVASTGECFAVFAFAPAI. Topologically, residues 171-184 are extracellular; the sequence is MALKERIGWRYSLL. Residues 185–205 traverse the membrane as a helical segment; it reads FVGLLQLNIVIFGALLRPIFI. Residues 206–299 are Cytoplasmic-facing; sequence RGPASPKIVI…KEKSFICYAL (94 aa). Phosphoserine is present on residues serine 234, serine 237, serine 240, and serine 247. The chain crosses the membrane as a helical span at residues 300 to 320; that stretch reads FGLFATLGFFAPSLYIIPLGI. The Extracellular segment spans residues 321–330; the sequence is SLGIDQDRAA. Residues 331-351 traverse the membrane as a helical segment; that stretch reads FLLSTMAIAEVFGRIGAGFVL. Residues 352–358 are Cytoplasmic-facing; the sequence is NREPIRK. The helical transmembrane segment at 359–379 threads the bilayer; the sequence is IYIELICVILLTVSLFAFTFA. Residues 380–381 lie on the Extracellular side of the membrane; sequence TE. The chain crosses the membrane as a helical span at residues 382–402; the sequence is FWGLMSCSIFFGFMVGTIGGT. The Cytoplasmic portion of the chain corresponds to 403-423; that stretch reads HIPLLAEDDVVGIEKMSSAAG. The helical transmembrane segment at 424–444 threads the bilayer; it reads VYIFIQSIAGLAGPPLAGLLV. At 445 to 452 the chain is on the extracellular side; it reads DQSKIYSR. A helical transmembrane segment spans residues 453–473; sequence AFYSCAAGMALAAVCLALVRP. Topologically, residues 474 to 523 are cytoplasmic; the sequence is CKMGLCQHHHSGETKVVSHRGKTLQDIPEDFLEMDLAKNEHRVHVQMEPV.

This sequence belongs to the major facilitator superfamily. Monocarboxylate porter (TC 2.A.1.13) family. In terms of assembly, forms functional complexes with BSG/CD147 or EMB/GP70 ancillary proteins.

It is found in the basolateral cell membrane. It catalyses the reaction taurine(out) = taurine(in). Functionally, monocarboxylate transporter selective for taurine. May associate with BSG/CD147 or EMB/GP70 ancillary proteins to mediate facilitative efflux or influx of taurine across the plasma membrane. The transport is pH- and sodium-independent. Rather low-affinity, is likely effective for taurine transport in tissues where taurine is present at high concentrations. This is Monocarboxylate transporter 7 from Homo sapiens (Human).